A 257-amino-acid chain; its full sequence is MLVLVSPAKTLDYENKAGTIEHTLPKLVQHSEQLIEECRKLAPSDIASLMKVSDKIAGLNAARFTSWSRDFSTDNAKQALYAFRGDVYTGLDADTLSQQSIERAQKHLRILSGLYGLLRPLDLMQPYRLEMGTRLANIKGTNLYQFWGDVITDEVNLALSEQGDQIVVNLASNEYFKAVKPKSLNGSLITPIFKDRKNGQYKVISFFAKRARGMMVRYILDNNIKTFSGLTEFDAAGYYYCEAESTAQAPVFKREEQ.

The protein belongs to the UPF0246 family.

This Shewanella sediminis (strain HAW-EB3) protein is UPF0246 protein Ssed_1188.